The primary structure comprises 238 residues: Ribonuclease PH (238 aa).

Phosphate is bound by residues Arg86 and Gly124 to Arg126.

The protein belongs to the RNase PH family. In terms of assembly, homohexameric ring arranged as a trimer of dimers.

It catalyses the reaction tRNA(n+1) + phosphate = tRNA(n) + a ribonucleoside 5'-diphosphate. Functionally, phosphorolytic 3'-5' exoribonuclease that plays an important role in tRNA 3'-end maturation. Removes nucleotide residues following the 3'-CCA terminus of tRNAs; can also add nucleotides to the ends of RNA molecules by using nucleoside diphosphates as substrates, but this may not be physiologically important. Probably plays a role in initiation of 16S rRNA degradation (leading to ribosome degradation) during starvation. The polypeptide is Ribonuclease PH (Solibacter usitatus (strain Ellin6076)).